We begin with the raw amino-acid sequence, 88 residues long: Small ribosomal subunit protein uS17c (88 aa).

The protein belongs to the universal ribosomal protein uS17 family. Part of the 30S ribosomal subunit.

The protein localises to the plastid. It is found in the cyanelle. Its function is as follows. One of the primary rRNA binding proteins, it binds specifically to the 5'-end of 16S ribosomal RNA. The protein is Small ribosomal subunit protein uS17c (rps17) of Cyanophora paradoxa.